A 1325-amino-acid polypeptide reads, in one-letter code: ATP-binding cassette sub-family C member 4 (1325 aa).

One can recognise an ABC transmembrane type-1 1 domain in the interval 92–377 (YLVLGIFTLI…FFPSAIERVS (286 aa)). Helical transmembrane passes span 93–113 (LVLG…PIFL), 136–156 (AYAT…HLYF), 207–227 (QVTV…AVTA), 228–248 (LLWM…IILL), 328–348 (SKII…VITA), 351–371 (VFVA…FFPS), and 440–460 (LLAV…AVLG). The region spanning 410 to 633 (VHVQDFTAFW…GIDFGSLLKK (224 aa)) is the ABC transporter 1 domain. An ATP-binding site is contributed by 445–452 (GPVGAGKS). Phosphothreonine occurs at positions 646 and 648. A compositionally biased stretch (low complexity) spans 657 to 667 (SSVWSQQSSRP). The tract at residues 657–688 (SSVWSQQSSRPSLKDGALESQDTENVPVTLSE) is disordered. 2 positions are modified to phosphoserine: Ser664 and Ser668. Residues 710 to 730 (HWIVFIFLILLNTAAQVAYVL) form a helical membrane-spanning segment. An ABC transmembrane type-1 2 domain is found at 714–1005 (FIFLILLNTA…CVRQSAEVEN (292 aa)). N-linked (GlcNAc...) asparagine glycans are attached at residues Asn746 and Asn754. 6 consecutive transmembrane segments (helical) span residues 771–791 (LTVA…YVLV), 836–856 (LPLT…VVSV), 858–878 (VAVI…FIFL), 954–974 (AICA…AKTL), 977–997 (GQVG…QWCV), and 1038–1058 (EGVI…PLVL). The region spanning 1041 to 1274 (IIFDNVNFMY…KESLFYKMVQ (234 aa)) is the ABC transporter 2 domain. 1075-1082 (GRTGAGKS) is an ATP binding site. Positions 1322–1325 (ETAL) match the PDZ-binding motif.

Belongs to the ABC transporter superfamily. ABCC family. Conjugate transporter (TC 3.A.1.208) subfamily. As to quaternary structure, interacts (via PDZ-binding motif) with SNX27 (via PDZ domain); this interaction accelerates MRP4 internalization. Mg(2+) serves as cofactor. Post-translationally, N-glycosylated; leading to substrate-selective effects on its transport activity. In terms of tissue distribution, widely expressed, with particularly high levels in prostate, but is barely detectable in liver. sinusoidal membrane of hepatocytes.

The protein localises to the basolateral cell membrane. Its subcellular location is the apical cell membrane. It catalyses the reaction ATP + H2O + xenobioticSide 1 = ADP + phosphate + xenobioticSide 2.. The catalysed reaction is an S-substituted glutathione(in) + ATP + H2O = an S-substituted glutathione(out) + ADP + phosphate + H(+). It carries out the reaction 17beta-estradiol 17-O-(beta-D-glucuronate)(in) + ATP + H2O = 17beta-estradiol 17-O-(beta-D-glucuronate)(out) + ADP + phosphate + H(+). The enzyme catalyses dehydroepiandrosterone 3-sulfate(in) + ATP + H2O = dehydroepiandrosterone 3-sulfate(out) + ADP + phosphate + H(+). It catalyses the reaction leukotriene C4(in) + ATP + H2O = leukotriene C4(out) + ADP + phosphate + H(+). The catalysed reaction is leukotriene B4(in) + ATP + H2O = leukotriene B4(out) + ADP + phosphate + H(+). It carries out the reaction urate(in) + ATP + H2O = urate(out) + ADP + phosphate + H(+). The enzyme catalyses 3',5'-cyclic GMP(in) + ATP + H2O = 3',5'-cyclic GMP(out) + ADP + phosphate + H(+). It catalyses the reaction 3',5'-cyclic AMP(in) + ATP + H2O = 3',5'-cyclic AMP(out) + ADP + phosphate + H(+). The catalysed reaction is prostaglandin E2(in) + ATP + H2O = prostaglandin E2(out) + ADP + phosphate + H(+). It carries out the reaction prostaglandin E1(in) + ATP + H2O = prostaglandin E1(out) + ADP + phosphate + H(+). The enzyme catalyses glycodeoxycholate(in) + glutathione(in) + ATP + H2O = glycodeoxycholate(out) + glutathione(out) + ADP + phosphate + H(+). It catalyses the reaction cholate(in) + glutathione(in) + ATP + H2O = cholate(out) + glutathione(out) + ADP + phosphate + H(+). The catalysed reaction is glycocholate(in) + glutathione(in) + ATP + H2O = glycocholate(out) + glutathione(out) + ADP + phosphate + H(+). It carries out the reaction taurocholate(in) + glutathione(in) + ATP + H2O = taurocholate(out) + glutathione(out) + ADP + phosphate + H(+). The enzyme catalyses glycochenodeoxycholate(in) + glutathione(in) + ATP + H2O = glycochenodeoxycholate(out) + glutathione(out) + ADP + phosphate + H(+). It catalyses the reaction taurochenodeoxycholate(in) + glutathione(in) + ATP + H2O = taurochenodeoxycholate(out) + glutathione(out) + ADP + phosphate + H(+). The catalysed reaction is glycoursodeoxycholate(in) + glutathione(in) + ATP + H2O = glycoursodeoxycholate(out) + glutathione(out) + ADP + phosphate + H(+). It carries out the reaction tauroursodeoxycholate(in) + glutathione(in) + ATP + H2O = tauroursodeoxycholate(out) + glutathione(out) + ADP + phosphate + H(+). With respect to regulation, GSH stimulates the transport of MRP4. Urate inhibits methotrexate transport but stimulates cGMP transport. Nonsteroidal anti-inflammatory drugs (NSAIDs) strongly suppress the transport of MRP4 substrates. Its function is as follows. ATP-dependent transporter of the ATP-binding cassette (ABC) family that actively extrudes physiological compounds and xenobiotics from cells. Transports a range of endogenous molecules that have a key role in cellular communication and signaling, including cyclic nucleotides such as cyclic AMP (cAMP) and cyclic GMP (cGMP), bile acids, steroid conjugates, urate, and prostaglandins. Mediates the ATP-dependent efflux of glutathione conjugates such as leukotriene C4 (LTC4) and leukotriene B4 (LTB4) too. The presence of GSH is necessary for the ATP-dependent transport of LTB4, whereas GSH is not required for the transport of LTC4. Mediates the cotransport of bile acids with reduced glutathione (GSH). Transports a wide range of drugs and their metabolites, including anticancer, antiviral and antibiotics molecules. Confers resistance to anticancer agents such as methotrexate. The protein is ATP-binding cassette sub-family C member 4 (ABCC4) of Homo sapiens (Human).